The primary structure comprises 381 residues: 40-kDa huntingtin-associated protein (381 aa).

An N-acetylalanine modification is found at alanine 2. Residues 34 to 36 carry the Nuclear localization signal motif; that stretch reads KKR. The tract at residues 221-265 is disordered; sequence QLELLPQPPSGPQPPLSGPQPRPVLGSTLPLPQPPDHAPGSVAPS. Residues 226 to 242 are compositionally biased toward pro residues; that stretch reads PQPPSGPQPPLSGPQPR.

In terms of assembly, interacts with HTT (via C-terminus). Interacts with RAB5A. Found in a complex with F8A1/F8A2/F8A3, HTT and RAB5A; mediates the recruitment of HTT by RAB5A onto early endosomes. In terms of tissue distribution, produced abundantly in a wide variety of cell types.

It localises to the cytoplasm. The protein resides in the nucleus. The protein localises to the early endosome. Its subcellular location is the nuclear body. Its function is as follows. RAB5A effector molecule that is involved in vesicular trafficking of early endosomes. Mediates the recruitment of HTT by RAB5A onto early endosomes. The HTT-F8A1/F8A2/F8A3-RAB5A complex stimulates early endosomal interaction with actin filaments and inhibits interaction with microtubules, leading to the reduction of endosome motility. This is 40-kDa huntingtin-associated protein (F8a1) from Mus musculus (Mouse).